The sequence spans 191 residues: Adenylate kinase (191 aa).

12–17 (GSGKTT) is a binding site for ATP. The interval 33–62 (STGDLLRAEVASGSELGKLIDSFISKGNLV) is NMP. Residues threonine 34, arginine 39, 60-62 (NLV), 87-90 (GYPR), and glutamine 94 contribute to the AMP site. The interval 129–135 (GRARGAD) is LID. An ATP-binding site is contributed by arginine 130. The AMP site is built by arginine 132 and arginine 144. ATP is bound at residue arginine 172.

Belongs to the adenylate kinase family. In terms of assembly, monomer.

It is found in the cytoplasm. It carries out the reaction AMP + ATP = 2 ADP. It functions in the pathway purine metabolism; AMP biosynthesis via salvage pathway; AMP from ADP: step 1/1. In terms of biological role, catalyzes the reversible transfer of the terminal phosphate group between ATP and AMP. Plays an important role in cellular energy homeostasis and in adenine nucleotide metabolism. The chain is Adenylate kinase from Campylobacter fetus subsp. fetus (strain 82-40).